Reading from the N-terminus, the 538-residue chain is Putative outer membrane porin BglH (538 aa).

The first 25 residues, 1 to 25 (MFRRNIITSAILLMAPLAFSAQSLA), serve as a signal peptide directing secretion.

Belongs to the porin LamB (TC 1.B.3) family.

It localises to the cell outer membrane. Functionally, may be a sugar porin with a broad carbohydrate specificity. This Escherichia coli (strain UTI89 / UPEC) protein is Putative outer membrane porin BglH (bglH).